A 53-amino-acid chain; its full sequence is Small polypeptide DEVIL 7 (53 aa).

The span at 1-16 shows a compositional bias: basic and acidic residues; it reads MREKYTKEEAVKNWEK. The interval 1 to 28 is disordered; the sequence is MREKYTKEEAVKNWEKKKNKPSSPKGVG. Positions 22 to 53 are required for DVL/RTFL small polypeptide activity; sequence SSPKGVGEFLKKKKGRFYIIGKCITMLLCSHK. A helical transmembrane segment spans residues 30–46; it reads FLKKKKGRFYIIGKCIT.

The protein belongs to the DVL/RTFL small polypeptides family.

It is found in the cell membrane. Functionally, small polypeptide acting as a regulatory molecule which coordinates cellular responses required for differentiation, growth and development, probably by restricting polar cell proliferation in lateral organs and coordinating socket cell recruitment and differentiation at trichome sites. This chain is Small polypeptide DEVIL 7, found in Arabidopsis thaliana (Mouse-ear cress).